Consider the following 403-residue polypeptide: Neuromedin U receptor homolog nmur-2 (403 aa).

The Extracellular segment spans residues 1 to 27 (MSQCTVEYNVSEITEYVLSTLGERCQS). Residues 28-48 (AGIVIPTVIIYGTIFLLGLFG) form a helical membrane-spanning segment. Residues 49–68 (NICTCIVIAANKSMHNPTNY) lie on the Cytoplasmic side of the membrane. A helical membrane pass occupies residues 69–89 (YLFSLAVSDIIALILGLPMEF). Topologically, residues 90-109 (YQSLDYSYPYRFSEGICKAR) are extracellular. The helical transmembrane segment at 110–130 (AFLIEFTSYASIMIICCFSFE) threads the bilayer. Topologically, residues 131–151 (RWLAICHPLRSKIFSTLWRAN) are cytoplasmic. The chain crosses the membrane as a helical span at residues 152 to 172 (VLIILAWTISFVCALPIAFIV). Over 173–216 (QINKLPLPEDAKYQPWTNKVSTDGIFVLHTEFCAMNQSRPDQQK) the chain is Extracellular. Residues 217 to 237 (MIIIFAFTVFFVIPAIAIVIM) traverse the membrane as a helical segment. The Cytoplasmic portion of the chain corresponds to 238–268 (YAHIAVQLESSEIDLKGDKMVKKRRNKSNRT). A helical membrane pass occupies residues 269 to 289 (VLKMLLSVVITFFICWLPFHI). Residues 290-304 (QRLLSVYTTWSETTT) are Extracellular-facing. A helical transmembrane segment spans residues 305 to 325 (ISPPVQFLSMIVFYISGFCYY). At 326–403 (SNSAANPILY…PHRKLEVHNY (78 aa)) the chain is on the cytoplasmic side.

The protein belongs to the G-protein coupled receptor 1 family.

It localises to the membrane. Its function is as follows. Putative G protein-coupled receptor for pyrokinin-like neuropeptide derived from the processing of the neuropeptide precursor capa-1. The protein is Neuromedin U receptor homolog nmur-2 of Caenorhabditis elegans.